Consider the following 345-residue polypeptide: Uroporphyrinogen decarboxylase (345 aa).

Residues 27–31 (RQAGR), phenylalanine 46, aspartate 76, tyrosine 152, serine 207, and histidine 320 each bind substrate.

Belongs to the uroporphyrinogen decarboxylase family. Homodimer.

It localises to the cytoplasm. The enzyme catalyses uroporphyrinogen III + 4 H(+) = coproporphyrinogen III + 4 CO2. It participates in porphyrin-containing compound metabolism; protoporphyrin-IX biosynthesis; coproporphyrinogen-III from 5-aminolevulinate: step 4/4. Its function is as follows. Catalyzes the decarboxylation of four acetate groups of uroporphyrinogen-III to yield coproporphyrinogen-III. This Geobacillus thermodenitrificans (strain NG80-2) protein is Uroporphyrinogen decarboxylase.